The chain runs to 54 residues: UPF0391 membrane protein Bpet1858 (54 aa).

2 helical membrane passes run 5–25 and 27–47; these read AVVFFVIAIIAAVLGFGGIAA and AAGIAKILFFVFLILALLSIL.

It belongs to the UPF0391 family.

The protein resides in the cell membrane. This Bordetella petrii (strain ATCC BAA-461 / DSM 12804 / CCUG 43448) protein is UPF0391 membrane protein Bpet1858.